Reading from the N-terminus, the 375-residue chain is Mitochondrial phosphate carrier protein 3, mitochondrial (375 aa).

The helical transmembrane segment at 76 to 96 (AFYAACTFGGILSCGLTHMTV) threads the bilayer. Solcar repeat units follow at residues 76 to 160 (AFYA…FKKT), 173 to 257 (YKTL…IVEM), and 274 to 353 (LQLG…FKVF). The Mitochondrial matrix portion of the chain corresponds to 97–134 (TPLDLVKCNMQIDPAKYKSISSGFGILLKEQGVKGFFR). A helical transmembrane segment spans residues 135 to 154 (GWVPTLLGYSAQGACKFGFY). At 155-175 (EYFKKTYSDLAGPEYTAKYKT) the chain is on the mitochondrial intermembrane side. A helical transmembrane segment spans residues 176-196 (LIYLAGSASAEIIADIALCPF). Residues 197 to 231 (EAVKVRVQTQPGFARGMSDGFPKFIKSEGYGGLYK) are Mitochondrial matrix-facing. Residues 232 to 251 (GLAPLWGRQIPYTMMKFASF) traverse the membrane as a helical segment. The Mitochondrial intermembrane segment spans residues 252-272 (ETIVEMIYKYAIPNPKSECSK). Residues 273-293 (GLQLGVSFAGGYVAGVFCAIV) form a helical membrane-spanning segment. Topologically, residues 294–332 (SHPADNLVSFLNNAKGATVGDAVKKIGMVGLFTRGLPLR) are mitochondrial matrix. The helical transmembrane segment at 333-353 (IVMIGTLTGAQWGLYDAFKVF) threads the bilayer. Residues 354 to 375 (VGLPTTGGVAPAPAIAATEAKA) lie on the Mitochondrial intermembrane side of the membrane.

The protein belongs to the mitochondrial carrier (TC 2.A.29) family. As to expression, expressed in stems, leaves and flowers. Strong expression in vascular tissues.

The protein resides in the mitochondrion inner membrane. Its function is as follows. Transport of phosphate groups from the cytosol to the mitochondrial matrix. Mediates salt stress tolerance through an ATP-dependent pathway and via modulation of the gibberellin metabolism. The chain is Mitochondrial phosphate carrier protein 3, mitochondrial (MPT3) from Arabidopsis thaliana (Mouse-ear cress).